Reading from the N-terminus, the 50-residue chain is Large ribosomal subunit protein bL33B (50 aa).

This sequence belongs to the bacterial ribosomal protein bL33 family.

This chain is Large ribosomal subunit protein bL33B, found in Mesomycoplasma hyopneumoniae (strain 7448) (Mycoplasma hyopneumoniae).